We begin with the raw amino-acid sequence, 214 residues long: MVSFKRYELPPLPYNYNALEPYIIEEIMKLHHQKHHNTYVKGANAALEKIEKHLKGEIQIDVRAVMRDFSFNYAGHIMHTIFWPNMAPPGKGGGTPGGRVADLIEKQFGGFEKFKALFSAAAKTVEGVGWGVLAFDPLTEELRILQVEKHNVLMTAGLVPILVIDVWEHAYYLQYKNDRGSYVENWWNVVNWDDVEKRLEQALNNAKPLYLLPQ.

Residues His31, His79, Asp165, and His169 each contribute to the Fe(3+) site. Residues His31, His79, Asp165, and His169 each coordinate Mn(2+).

Belongs to the iron/manganese superoxide dismutase family. Mn(2+) serves as cofactor. It depends on Fe(3+) as a cofactor.

The catalysed reaction is 2 superoxide + 2 H(+) = H2O2 + O2. Functionally, destroys superoxide anion radicals which are normally produced within the cells and which are toxic to biological systems. Catalyzes the dismutation of superoxide anion radicals into O2 and H2O2 by successive reduction and oxidation of the transition metal ion at the active site. In Aeropyrum pernix (strain ATCC 700893 / DSM 11879 / JCM 9820 / NBRC 100138 / K1), this protein is Superoxide dismutase [Mn/Fe] (sod).